A 1048-amino-acid polypeptide reads, in one-letter code: Probable histidine kinase 2 (1048 aa).

Topologically, residues 1 to 16 are cytoplasmic; the sequence is MREVEEVSKWRRRCCY. Residues 17–37 traverse the membrane as a helical segment; that stretch reads FWILFPLAVIATCMTITVVTF. Residues 38–336 are Extracellular-facing; the sequence is CSSTMYMTEV…AMVGVFRRGG (299 aa). The chain crosses the membrane as a helical span at residues 337-357; sequence VTMVAVACAAAAAATVACVLM. At 358–1048 the chain is on the cytoplasmic side; it reads ARALRRAVAR…AVHGVCKGKN (691 aa). The Histidine kinase domain occupies 398–662; that stretch reads SASHDIRSAL…CFGFNVLLKT (265 aa). Position 401 is a phosphohistidine; by autocatalysis (H401). The Response regulatory domain maps to 912–1044; that stretch reads HVLLVEDTLV…RIVEAVHGVC (133 aa). A 4-aspartylphosphate modification is found at D975.

Activation probably requires a transfer of a phosphate group between a His in the transmitter domain and an Asp of the receiver domain.

It localises to the cell membrane. The enzyme catalyses ATP + protein L-histidine = ADP + protein N-phospho-L-histidine.. Its function is as follows. Cytokinin receptor related to bacterial two-component regulators. Functions as a histidine kinase and transmits the stress signal to a downstream MAPK cascade. This chain is Probable histidine kinase 2, found in Oryza sativa subsp. indica (Rice).